A 318-amino-acid chain; its full sequence is Transaldolase (318 aa).

Lys126 acts as the Schiff-base intermediate with substrate in catalysis.

This sequence belongs to the transaldolase family. Type 1 subfamily. Homodimer.

The protein resides in the cytoplasm. The enzyme catalyses D-sedoheptulose 7-phosphate + D-glyceraldehyde 3-phosphate = D-erythrose 4-phosphate + beta-D-fructose 6-phosphate. It participates in carbohydrate degradation; pentose phosphate pathway; D-glyceraldehyde 3-phosphate and beta-D-fructose 6-phosphate from D-ribose 5-phosphate and D-xylulose 5-phosphate (non-oxidative stage): step 2/3. In terms of biological role, transaldolase is important for the balance of metabolites in the pentose-phosphate pathway. The chain is Transaldolase from Variovorax paradoxus (strain S110).